The chain runs to 339 residues: Fructose-1,6-bisphosphatase isozyme 2 (339 aa).

Residues 3 to 10 (DRSPFETD) form an important for interaction with ALDOA region. AMP contacts are provided by residues Val18 and 28-32 (TGELT). The Mg(2+) site is built by Asp69 and Glu98. Residue 113-114 (KY) participates in AMP binding. Residues Asp119, Leu121, and Asp122 each contribute to the Mg(2+) site. Asp122 is a binding site for substrate. AMP is bound at residue Arg141. The short motif at 204-208 (KKKGK) is the Nuclear localization signal element. 213 to 216 (NEGY) lines the substrate pocket. Phosphotyrosine occurs at positions 216 and 219. Residues 245–249 (YVGSM), Tyr265, and Lys275 contribute to the substrate site. A Mg(2+)-binding site is contributed by Glu281.

This sequence belongs to the FBPase class 1 family. In terms of assembly, homotetramer. Interacts with ALDOA; the interaction blocks inhibition by physiological concentrations of AMP and reduces inhibition by Ca(2+). Interacts with alpha-actinin and F-actin. Mg(2+) is required as a cofactor.

It is found in the cell junction. Its subcellular location is the cytoplasm. The protein resides in the nucleus. The protein localises to the myofibril. It localises to the sarcomere. It is found in the z line. It carries out the reaction beta-D-fructose 1,6-bisphosphate + H2O = beta-D-fructose 6-phosphate + phosphate. The protein operates within carbohydrate biosynthesis; gluconeogenesis. Subject to complex allosteric regulation. The enzyme can assume an active R-state, or an inactive T-state. Intermediate conformations may exist. AMP acts as an allosteric inhibitor. Fructose 2,6-bisphosphate acts as a competitive inhibitor. Strongly inhibited by Ca(2+). Catalyzes the hydrolysis of fructose 1,6-bisphosphate to fructose 6-phosphate in the presence of divalent cations and probably participates in glycogen synthesis from carbohydrate precursors, such as lactate. The protein is Fructose-1,6-bisphosphatase isozyme 2 (FBP2) of Oryctolagus cuniculus (Rabbit).